The primary structure comprises 339 residues: mRNA cap guanine-N(7) methyltransferase 2 (339 aa).

The mRNA cap 0 methyltransferase domain maps to 1 to 277; sequence MAVTPHHRLY…LYSTFVFQKP (277 aa). Residues lysine 14, aspartate 54, and 82-83 contribute to the S-adenosyl-L-methionine site; that span reads DP. The segment at 314-339 is disordered; the sequence is VSRTDILPPADNEKGILGPGPADMRL.

This sequence belongs to the class I-like SAM-binding methyltransferase superfamily. mRNA cap 0 methyltransferase family.

It is found in the nucleus. The catalysed reaction is a 5'-end (5'-triphosphoguanosine)-ribonucleoside in mRNA + S-adenosyl-L-methionine = a 5'-end (N(7)-methyl 5'-triphosphoguanosine)-ribonucleoside in mRNA + S-adenosyl-L-homocysteine. MRNA-capping methyltransferase that methylates the N7 position of the added guanosine to the 5'-cap structure of mRNAs. Binds RNA containing 5'-terminal GpppC. The chain is mRNA cap guanine-N(7) methyltransferase 2 from Oryza sativa subsp. japonica (Rice).